The following is a 470-amino-acid chain: MGSGRVRVRFAPSPTGIFHVGGARSALFNWLVALRAGGDFVLRVEDTDASRNRPEWTDGIISALDWLGISPGRYEGPVLQSSRADRHRAAAVRLREAGLAYFCDCTREALAERTGNAQHGYDGFCRDRGLEPGPGRALRFRTPDDGVTTVHDLIRGTPEFPNDTIEDFVIARADGSAVFLLANVVDDLEMGITHVIRGEEHLSNTPKQQLLWAALGAAEPPVWAHVPVIVNEKRQKLSKRRDKVALESYRDEGYLPGAMKNYLMLLGWAPSGDDEIVPWETIESTFDLADVKPSPAFFDEKKLRAFNGEYIRALSVEEFIAAVEPWLAPPAAPWAADAFDAGTFAAVAGLAQSRVSVLAEIVPMVDFLFLPAAPVDDAAWAKAMKGPAAQLLADVHDVFGKIEWDAETLKATLAELGERHGLKLAKAQAPVRVAVTGRTVGLPLFESLEVFGREATRRRIAAARDRLAAG.

A 'HIGH' region motif is present at residues 12–22 (PSPTGIFHVGG). Zn(2+) is bound by residues Cys103, Cys105, Cys125, and Asp127. The 'KMSKS' region signature appears at 236 to 240 (KLSKR). Lys239 contributes to the ATP binding site.

This sequence belongs to the class-I aminoacyl-tRNA synthetase family. Glutamate--tRNA ligase type 1 subfamily. In terms of assembly, monomer. It depends on Zn(2+) as a cofactor.

The protein localises to the cytoplasm. It catalyses the reaction tRNA(Glu) + L-glutamate + ATP = L-glutamyl-tRNA(Glu) + AMP + diphosphate. Functionally, catalyzes the attachment of glutamate to tRNA(Glu) in a two-step reaction: glutamate is first activated by ATP to form Glu-AMP and then transferred to the acceptor end of tRNA(Glu). The chain is Glutamate--tRNA ligase from Frankia alni (strain DSM 45986 / CECT 9034 / ACN14a).